Reading from the N-terminus, the 37-residue chain is Large ribosomal subunit protein bL36 (37 aa).

This sequence belongs to the bacterial ribosomal protein bL36 family.

In Clostridium perfringens (strain ATCC 13124 / DSM 756 / JCM 1290 / NCIMB 6125 / NCTC 8237 / Type A), this protein is Large ribosomal subunit protein bL36.